The chain runs to 398 residues: MQRVRVSSQRAVVHKLGDSQMTLSPKFRVAASIQSTLFDRSSELELSLRGEPLIPGLPDDVALNCLLRVPVQSHVSSKSVCKRWHLLFGTKETFFAKRKEFGFKDPWLFVVGFSRCTGKIQWKVLDLRNLTWHEIPAMPCRDKVCPHGFRSVSMPREGTMFVCGGMVSDSDCPLDLVLKYDMVKNHWTVTNKMITARSFFASGVIDGMIYAAGGNAADLYELDCAEVLNPLDGNWRPVSNMVAHMASYDTAVLNGKLLVTEGWLWPFFVSPRGQVYDPRTDQWETMSMGLREGWTGTSVVIYDRLFIVSELERMKMKVYDPVTDSWETINGPELPEQICRPFAVNCYGNRVYVVGRNLHLAVGNIWQSENKFAVRWEVVESPERYADITPSNSQILFA.

Residues Glu-51–Arg-98 enclose the F-box domain. Kelch repeat units lie at residues Pro-106–Val-152, Thr-159–Gly-207, Ile-209–Gly-255, Leu-257–Arg-304, and Leu-305–Cys-346.

The protein is F-box/kelch-repeat protein At1g30090 of Arabidopsis thaliana (Mouse-ear cress).